The sequence spans 630 residues: Plastin-1 (630 aa).

Residues methionine 1–glutamate 114 are fimbrin headpiece. EF-hand domains lie at glutamate 11 to proline 46 and lysine 51 to lysine 86. Positions 24, 26, 28, 30, 35, 64, 66, 68, 70, and 75 each coordinate Ca(2+). Actin-binding stretches follow at residues threonine 108–threonine 375 and tyrosine 376–arginine 624. The fimbrin core stretch occupies residues glycine 115–lysine 630. 4 Calponin-homology (CH) domains span residues glutamate 122–leucine 238, leucine 266–proline 377, serine 396–threonine 505, and lysine 517–leucine 626.

Monomer. In terms of processing, the N-terminus is blocked.

The protein resides in the cytoplasm. It localises to the cell projection. It is found in the stereocilium. In terms of biological role, actin-bundling protein. In the inner ear, it is required for stereocilia formation. Mediates liquid packing of actin filaments that is necessary for stereocilia to grow to their proper dimensions. The polypeptide is Plastin-1 (PLS1) (Gallus gallus (Chicken)).